The primary structure comprises 395 residues: Probable inactive serine/threonine-protein kinase DDB_G0293746 (395 aa).

Positions 9–395 (YSEIDLISDN…ITQFIIDYLF (387 aa)) constitute a Protein kinase domain. ATP contacts are provided by residues 15–23 (ISDNPFKNY) and lysine 54. The tract at residues 213–266 (NSSLSSLSSSTSSSSSSSSSTNCNNNTTENNNNNYNNNNNNNNNNNNNNNNNSL) is disordered.

It belongs to the protein kinase superfamily. Ser/Thr protein kinase family.

The polypeptide is Probable inactive serine/threonine-protein kinase DDB_G0293746 (Dictyostelium discoideum (Social amoeba)).